A 331-amino-acid polypeptide reads, in one-letter code: HTH-type transcriptional regulator GntR (331 aa).

An HTH lacI-type domain is found at 6–60 (PVLQDVADRVGVTKMTVSRFLRNPEQVSVALRGKIAAALDELGYIPNRAPDILSN). Positions 8 to 27 (LQDVADRVGVTKMTVSRFLR) form a DNA-binding region, H-T-H motif.

The protein operates within carbohydrate acid metabolism; D-gluconate degradation [regulation]. In terms of biological role, negative regulator for the gluconate utilization system GNT-I, the gntUKR operon. This chain is HTH-type transcriptional regulator GntR (gntR), found in Escherichia coli O6:H1 (strain CFT073 / ATCC 700928 / UPEC).